We begin with the raw amino-acid sequence, 87 residues long: Phosphoribosyl-ATP pyrophosphatase (87 aa).

The protein belongs to the PRA-PH family.

The protein resides in the cytoplasm. The catalysed reaction is 1-(5-phospho-beta-D-ribosyl)-ATP + H2O = 1-(5-phospho-beta-D-ribosyl)-5'-AMP + diphosphate + H(+). It functions in the pathway amino-acid biosynthesis; L-histidine biosynthesis; L-histidine from 5-phospho-alpha-D-ribose 1-diphosphate: step 2/9. The sequence is that of Phosphoribosyl-ATP pyrophosphatase from Bifidobacterium adolescentis (strain ATCC 15703 / DSM 20083 / NCTC 11814 / E194a).